Consider the following 288-residue polypeptide: 33 kDa chaperonin (288 aa).

Intrachain disulfides connect cysteine 235/cysteine 237 and cysteine 268/cysteine 271.

It belongs to the HSP33 family. In terms of processing, under oxidizing conditions two disulfide bonds are formed involving the reactive cysteines. Under reducing conditions zinc is bound to the reactive cysteines and the protein is inactive.

The protein localises to the cytoplasm. Its function is as follows. Redox regulated molecular chaperone. Protects both thermally unfolding and oxidatively damaged proteins from irreversible aggregation. Plays an important role in the bacterial defense system toward oxidative stress. The polypeptide is 33 kDa chaperonin (Streptococcus thermophilus (strain ATCC BAA-250 / LMG 18311)).